Reading from the N-terminus, the 296-residue chain is Ribosomal RNA small subunit methyltransferase J (296 aa).

Aspartate 205 contributes to the S-adenosyl-L-methionine binding site.

Belongs to the methyltransferase superfamily. RsmJ family.

Its subcellular location is the cytoplasm. It catalyses the reaction guanosine(1516) in 16S rRNA + S-adenosyl-L-methionine = N(2)-methylguanosine(1516) in 16S rRNA + S-adenosyl-L-homocysteine + H(+). Specifically methylates the guanosine in position 1516 of 16S rRNA. This chain is Ribosomal RNA small subunit methyltransferase J, found in Psychrobacter arcticus (strain DSM 17307 / VKM B-2377 / 273-4).